The chain runs to 697 residues: Elongation factor G (697 aa).

Residues 8-282 (ENTRNIGIMA…AIVDYMPSPV (275 aa)) form the tr-type G domain. GTP contacts are provided by residues 17–24 (AHIDAGKT), 81–85 (DTPGH), and 135–138 (NKMD).

This sequence belongs to the TRAFAC class translation factor GTPase superfamily. Classic translation factor GTPase family. EF-G/EF-2 subfamily.

The protein localises to the cytoplasm. Functionally, catalyzes the GTP-dependent ribosomal translocation step during translation elongation. During this step, the ribosome changes from the pre-translocational (PRE) to the post-translocational (POST) state as the newly formed A-site-bound peptidyl-tRNA and P-site-bound deacylated tRNA move to the P and E sites, respectively. Catalyzes the coordinated movement of the two tRNA molecules, the mRNA and conformational changes in the ribosome. In Acetivibrio thermocellus (strain ATCC 27405 / DSM 1237 / JCM 9322 / NBRC 103400 / NCIMB 10682 / NRRL B-4536 / VPI 7372) (Clostridium thermocellum), this protein is Elongation factor G.